The sequence spans 62 residues: Delta-theraphotoxin-Cg1a 1 (62 aa).

The N-terminal stretch at 1–21 (MKTSILFVIFSLALLFALSAA) is a signal peptide. A propeptide spanning residues 22–29 (TEIEETDR) is cleaved from the precursor. 3 disulfides stabilise this stretch: Cys-31–Cys-46, Cys-38–Cys-51, and Cys-45–Cys-58.

This sequence belongs to the neurotoxin 10 (Hwtx-1) family. 33 (Jztx-1) subfamily. As to expression, expressed by the venom gland.

The protein resides in the secreted. Its function is as follows. Inhibits voltage-gated sodium channels, preferentially subtype Nav1.5/SCN5A (in cardiac myocytes), but also Nav1.6/SCN8A and Nav1.7/SCN9A (TTX-sensitive Nav in rat DRG neurons) and invertebrate Nav (in insect neurons) as well as voltage-gated potassium channels of the subtype Kv2.1/KCNB1. Is suggested to bind to site 3 of the sodium channels and inhibit the inactivation of the activated channels, thereby blocking neuronal transmission. On potassium channels, inhibits activation of channels with an IC(50) of 8.05 uM through a voltage sensor-trapping mechanism. Increases muscle contraction in several assays (mouse phrenic nerve-diaphragm, toad heart, rat vas deferens) and is suggested to act both presynaptically and postsynaptically. Moderately inhibits voltage-gated sodium channels and weakly inhibits voltage-gated potassium channel. Inhibits the inactivation of rat Nav1.2/SCN2A (IC(50)=870 nM), rat Nav1.3/SCN3A (IC(50)=845 nM), rat Nav1.4/SCN4A (IC(50)=339 nM), human Nav1.5/SCN5A (IC(50)=335 nM) and human Nav1.7/SCN9A sodium channels (IC(50)=348 nM). The toxin delays the inactivation of sodium channels without affecting the activation and steady-state inactivation kinetics in the physiological range of voltages. Site-directed mutagenesis of the sodium channel indicates that the toxin interacts with site 3 located at the extracellular S3-S4 linker of domain IV. On potassium channels, it inhibits activation of channels with an IC(50) of 8.05 uM through a voltage sensor-trapping mechanism. It increases muscle contraction in several assays (mouse phrenic nerve-diaphragm, toad heart, rat vas deferens) and is suggested to act both presynaptically and postsynaptically. This Chilobrachys guangxiensis (Chinese earth tiger tarantula) protein is Delta-theraphotoxin-Cg1a 1.